A 172-amino-acid chain; its full sequence is Interferon tau-2 (172 aa).

Cystine bridges form between cysteine 1/cysteine 99 and cysteine 29/cysteine 139. N-linked (GlcNAc...) asparagine glycosylation occurs at asparagine 78.

Belongs to the alpha/beta interferon family. IFN-alphaII subfamily. As to expression, constitutively and exclusively expressed in the mononuclear cells of the extraembryonic trophectoderm.

It is found in the secreted. In terms of biological role, paracrine hormone primarily responsible for maternal recognition of pregnancy. Interacts with endometrial receptors, probably type I interferon receptors, and blocks estrogen receptor expression, preventing the estrogen-induced increase in oxytocin receptor expression in the endometrium. This results in the suppression of the pulsatile endometrial release of the luteolytic hormone prostaglandin F2-alpha, hindering the regression of the corpus luteum (luteolysis) and therefore a return to ovarian cyclicity. This, and a possible direct effect of IFN-tau on prostaglandin synthesis, leads in turn to continued ovarian progesterone secretion, which stimulates the secretion by the endometrium of the nutrients required for the growth of the conceptus. In summary, displays particularly high antiviral and antiproliferative potency concurrently with particular weak cytotoxicity, high antiluteolytic activity and immunomodulatory properties. In contrast with other IFNs, IFN-tau is not virally inducible. The chain is Interferon tau-2 (IFNT2) from Bos taurus (Bovine).